Reading from the N-terminus, the 314-residue chain is DNA-directed RNA polymerase subunit alpha (314 aa).

Positions 1 to 228 (MIEIEKPKIE…EHLSIFVNLT (228 aa)) are alpha N-terminal domain (alpha-NTD). Residues 245 to 314 (KEKVLEMTIE…DLGLSLRNEN (70 aa)) form an alpha C-terminal domain (alpha-CTD) region.

Belongs to the RNA polymerase alpha chain family. Homodimer. The RNAP catalytic core consists of 2 alpha, 1 beta, 1 beta' and 1 omega subunit. When a sigma factor is associated with the core the holoenzyme is formed, which can initiate transcription.

It carries out the reaction RNA(n) + a ribonucleoside 5'-triphosphate = RNA(n+1) + diphosphate. Its function is as follows. DNA-dependent RNA polymerase catalyzes the transcription of DNA into RNA using the four ribonucleoside triphosphates as substrates. The polypeptide is DNA-directed RNA polymerase subunit alpha (Listeria innocua serovar 6a (strain ATCC BAA-680 / CLIP 11262)).